The following is a 1548-amino-acid chain: Multidrug resistance protein (1548 aa).

The Cytoplasmic segment spans residues 1-238 (MVDNGHVTIA…YHVWAQILPK (238 aa)). The 284-residue stretch at 231–514 (VWAQILPKLL…IPIIISSILQ (284 aa)) folds into the ABC transmembrane type-1 1 domain. The chain crosses the membrane as a helical span at residues 239 to 256 (LLSDVTALMLPVLLEYFV). Asn-263 carries an N-linked (GlcNAc...) asparagine glycan. Helical transmembrane passes span 266–287 (WGWG…SCSA), 349–367 (VMYF…LLLI), 375–392 (VPGM…AVIS), 463–480 (ATPT…HVSG), and 500–519 (VSFF…FVSA). Residues 520–932 (KRVTAFIECP…PWSTYVAYLK (413 aa)) lie on the Cytoplasmic side of the membrane. The ABC transporter 1 domain occupies 634–855 (VEEGDREYYQ…ALEETLRGEL (222 aa)). 667-674 (GSTGSGKS) provides a ligand contact to ATP. A run of 4 helical transmembrane segments spans residues 933–950 (SCGG…FALT), 975–993 (TYLY…GSPL), 1051–1070 (GYLY…IIMV), and 1072–1088 (VQPF…YSYY). The region spanning 940 to 1221 (WGCLLATFAL…LVRQVAMVEA (282 aa)) is the ABC transmembrane type-1 2 domain. Residues Asn-1095 and Asn-1154 are each glycosylated (N-linked (GlcNAc...) asparagine). The next 2 helical transmembrane spans lie at 1164-1182 (LEFL…GVIG) and 1186-1205 (GASS…SMTL). Residues 1206–1548 (TETLNWLVRQ…RIVQPAVLSD (343 aa)) are Cytoplasmic-facing. Positions 1286–1521 (LVLEGVQMRY…HQSMFHSMVE (236 aa)) constitute an ABC transporter 2 domain. Residue 1320–1327 (GRTGSGKS) participates in ATP binding.

It belongs to the ABC transporter superfamily. ABCB family. Multidrug resistance exporter (TC 3.A.1.201) subfamily.

The protein resides in the membrane. The enzyme catalyses ATP + H2O + xenobioticSide 1 = ADP + phosphate + xenobioticSide 2.. The sequence is that of Multidrug resistance protein (PGPA) from Leishmania tarentolae (Sauroleishmania tarentolae).